Here is a 957-residue protein sequence, read N- to C-terminus: Calsyntenin-3 (957 aa).

The signal sequence occupies residues M1–C19. At N20–A848 the chain is on the extracellular side. Cadherin domains are found at residues I29–F145 and V146–W246. N-linked (GlcNAc...) asparagine glycans are attached at residues N299, N347, and N508. A helical transmembrane segment spans residues A849–V869. Residues R870–Y957 lie on the Cytoplasmic side of the membrane. Positions C919–Y957 are disordered. Acidic residues predominate over residues Q928–A938. Residues S944–Y957 show a composition bias toward basic and acidic residues.

It belongs to the calsyntenin family. As to quaternary structure, interacts (via cadherin domains) with both alpha and beta isoforms of neurexins (NRXN1, NRXN2 and NRXN3). Directly interacts with APBA2. Forms a tripartite complex with APBA2 and APP. Interacts with low affinity with KLC1. Interacts with SLC23A2/SVCT2. In terms of processing, proteolytically processed under normal cellular conditions. A primary zeta-cleavage generates a large extracellular (soluble) N-terminal domain (sAlc) and a short C-terminal transmembrane fragment (CTF1). A secondary cleavage catalyzed by gamma-secretase within the transmembrane domain releases the beta-Alc-beta chain in the extracellular milieu and produces an intracellular fragment (AlcICD). This processing is strongly suppressed in the tripartite complex formed with APBA2 and APP, which seems to prevent the association with gamma-secretase.

Its subcellular location is the postsynaptic cell membrane. The protein resides in the endoplasmic reticulum membrane. It is found in the golgi apparatus membrane. The protein localises to the cell projection. It localises to the dendrite. Its function is as follows. Postsynaptic adhesion molecule that binds to presynaptic neurexins to mediate both excitatory and inhibitory synapse formation. Promotes synapse development by acting as a cell adhesion molecule at the postsynaptic membrane, which associates with both neurexin-alpha and neurexin-beta proteins at the presynaptic membrane. Regulates the balance between excitatory and inhibitory synapses by inhibiting formation of excitatory parallel-fiber synapses and promoting formation of inhibitory synapses in the same neuron. May also be involved in ascorbate (vitamin C) uptake via its interaction with SLC23A2/SVCT2. Complex formation with APBA2 and APP, stabilizes APP metabolism and enhances APBA2-mediated suppression of beta-APP40 secretion, due to the retardation of intracellular APP maturation. The chain is Calsyntenin-3 (CLSTN3) from Bos taurus (Bovine).